The primary structure comprises 775 residues: Metal transporter CNNM4 (775 aa).

Residues 1–178 are Extracellular-facing; that stretch reads MAPVGGGGRP…LLFMVEEPGR (178 aa). N85 and N122 each carry an N-linked (GlcNAc...) asparagine glycan. Positions 178–358 constitute a CNNM transmembrane domain; that stretch reads RFLPLWLHIL…EPYNDLVKEE (181 aa). The chain crosses the membrane as a helical span at residues 179–199; the sequence is FLPLWLHILLITVLLVLSGIF. The Cytoplasmic portion of the chain corresponds to 200 to 240; that stretch reads SGLNLGLMALDPMELRIVQNCGTEKERRYARKIEPIRRKGN. An intramembrane region (helical) is located at residues 241–261; that stretch reads YLLCSLLLGNVLVNTSLTILL. Over 262–264 the chain is Cytoplasmic; sequence DNL. Residues 265–285 form a helical membrane-spanning segment; the sequence is IGSGLMAVASSTIGIVIFGEI. Residues 286-293 are Extracellular-facing; the sequence is LPQALCSR. A helical transmembrane segment spans residues 294–316; that stretch reads HGLAVGANTILLTKFFMLLTFPL. Over 317 to 775 the chain is Cytoplasmic; that stretch reads SFPISKLLDF…LHKASHENAI (459 aa). CBS domains follow at residues 377–438 and 445–511; these read MTQL…CTPL and YNHP…ILDE. Phosphoserine occurs at positions 660, 664, and 770.

Belongs to the ACDP family. As to quaternary structure, interacts with COX11. In terms of tissue distribution, widely expressed. Highly expressed in heart.

Its subcellular location is the cell membrane. Probable metal transporter. The interaction with the metal ion chaperone COX11 suggests that it may play a role in sensory neuron functions. May play a role in biomineralization and retinal function. This is Metal transporter CNNM4 (CNNM4) from Homo sapiens (Human).